The chain runs to 128 residues: uncharacterized protein (128 aa).

This is an uncharacterized protein from Enterobacteria phage LZ3 (Bacteriophage LZ3).